Reading from the N-terminus, the 470-residue chain is Light-independent protochlorophyllide reductase subunit N (470 aa).

3 residues coordinate [4Fe-4S] cluster: C23, C48, and C108.

Belongs to the BchN/ChlN family. In terms of assembly, protochlorophyllide reductase is composed of three subunits; ChlL, ChlN and ChlB. Forms a heterotetramer of two ChlB and two ChlN subunits. [4Fe-4S] cluster serves as cofactor.

The protein localises to the plastid. Its subcellular location is the chloroplast. The catalysed reaction is chlorophyllide a + oxidized 2[4Fe-4S]-[ferredoxin] + 2 ADP + 2 phosphate = protochlorophyllide a + reduced 2[4Fe-4S]-[ferredoxin] + 2 ATP + 2 H2O. Its pathway is porphyrin-containing compound metabolism; chlorophyll biosynthesis (light-independent). Component of the dark-operative protochlorophyllide reductase (DPOR) that uses Mg-ATP and reduced ferredoxin to reduce ring D of protochlorophyllide (Pchlide) to form chlorophyllide a (Chlide). This reaction is light-independent. The NB-protein (ChlN-ChlB) is the catalytic component of the complex. This is Light-independent protochlorophyllide reductase subunit N from Zygnema circumcarinatum (Green alga).